Reading from the N-terminus, the 160-residue chain is Succinate dehydrogenase assembly factor 2-B, mitochondrial (160 aa).

Residues 1–23 (MLRQLKLTLNISRWIFMPWQRHA) constitute a mitochondrion transit peptide.

It belongs to the SDHAF2 family. As to quaternary structure, interacts with the flavoprotein subunit within the SDH catalytic dimer.

The protein localises to the mitochondrion matrix. Plays an essential role in the assembly of succinate dehydrogenase (SDH), an enzyme complex (also referred to as respiratory complex II) that is a component of both the tricarboxylic acid (TCA) cycle and the mitochondrial electron transport chain, and which couples the oxidation of succinate to fumarate with the reduction of ubiquinone (coenzyme Q) to ubiquinol. Required for flavinylation (covalent attachment of FAD) of the flavoprotein subunit of the SDH catalytic dimer. The polypeptide is Succinate dehydrogenase assembly factor 2-B, mitochondrial (Drosophila pseudoobscura pseudoobscura (Fruit fly)).